A 103-amino-acid chain; its full sequence is Salivary thrombin inhibitor anophelin (103 aa).

Residues 1–21 form the signal peptide; the sequence is MASKLFVLAFLCLALVVVVQS. Residues 24 to 103 are disordered; the sequence is QYARGDVPTY…PAASSSESDE (80 aa). The segment at 56-68 is blocks exosite I of host thrombin; sequence EEFDPSLLEEHAD. A blocks active site cleft of host thrombin in a reverse direction compared to substrates region spans residues 74–77; that stretch reads DPGR. Positions 91 to 103 are enriched in low complexity; the sequence is ASAPAASSSESDE.

This sequence belongs to the anophelin family. In terms of assembly, interacts with human F2 (thrombin); the interaction results in thrombin inhibition. In terms of tissue distribution, female salivary gland (at protein level). Not detected in female midgut, head, carcass and male tissues (at protein level).

The protein localises to the secreted. With respect to regulation, increasing concentration of NaCl decreases affinity for thrombin. Its function is as follows. Salivary protein with anticoagulant activity that inhibits host thrombin (F2); binds to the proteinase in a reverse orientation (opposite to substrates). The protein is Salivary thrombin inhibitor anophelin of Anopheles gambiae (African malaria mosquito).